Reading from the N-terminus, the 280-residue chain is Golgi phosphoprotein 3-like A (280 aa).

The segment at 1-32 is disordered; the sequence is MTTLIRRGRRAEEGQERRADSEDSIKDKDEEE. Residues 10 to 32 show a composition bias toward basic and acidic residues; sequence RAEEGQERRADSEDSIKDKDEEE. A 1,2-diacyl-sn-glycero-3-phospho-(1D-myo-inositol 4-phosphate)-binding residues include tryptophan 62, arginine 71, arginine 152, and arginine 155. The interval 171–182 is beta-hairpin required for oligomerization; sequence EKQNFLLFDMTT.

Belongs to the GOLPH3/VPS74 family. In terms of assembly, homooligomer.

Its subcellular location is the golgi apparatus. It is found in the golgi stack membrane. The protein localises to the trans-Golgi network membrane. Phosphatidylinositol-4-phosphate-binding protein that may play a role in the process of vesicle budding at the Golgi and anterograde transport to the plasma membrane. The sequence is that of Golgi phosphoprotein 3-like A (golph3l-a) from Xenopus laevis (African clawed frog).